A 153-amino-acid polypeptide reads, in one-letter code: Aspartate carbamoyltransferase regulatory chain (153 aa).

Zn(2+) is bound by residues Cys-109, Cys-114, Cys-138, and Cys-141.

The protein belongs to the PyrI family. In terms of assembly, contains catalytic and regulatory chains. It depends on Zn(2+) as a cofactor.

Functionally, involved in allosteric regulation of aspartate carbamoyltransferase. The chain is Aspartate carbamoyltransferase regulatory chain from Wigglesworthia glossinidia brevipalpis.